Here is a 202-residue protein sequence, read N- to C-terminus: Myosin regulatory light chain 10 (202 aa).

Residues 1–21 (MGQSSLDHGVQGPVAGTGDFG) form a disordered region. 3 consecutive EF-hand domains span residues 60-95 (SQIQ…LGRI), 130-165 (DPEE…QADR), and 166-201 (FSEE…GEEK). Residues Asp-73, Asn-75, Asp-77, and Asp-84 each coordinate Ca(2+).

In terms of assembly, myosin is a hexamer of 2 heavy chains and 4 light chains. In terms of tissue distribution, specifically expressed in precursor B- and T-lymphocytes.

This chain is Myosin regulatory light chain 10 (Myl10), found in Mus musculus (Mouse).